A 336-amino-acid chain; its full sequence is MIEADRLISAGTTLPEDVADRAIRPKLLEEYVGQPQVRSQMEIFIKAAKLRGDALDHLLIFGPPGLGKTTLANIVANEMGVNLRTTSGPVLEKAGDLAAMLTNLEPHDVLFIDEIHRLSPVVEEVLYPAMEDYQLDIMIGEGPAARSIKIDLPPFTLIGATTRAGSLTSPLRDRFGIVQRLEFYQVPDLQYIVSRSARFMGLEMSDDGAQEVARRARGTPRIANRLLRRVRDFAEVKHDGTISADIAAQALDMLNVDAEGFDYMDRKLLLAVIDKFFGGPVGLDNLAAAIGEERETIEDVLEPYLIQQGFLQRTPRGRMATTRAWNHFGITPPEMP.

Residues 4–184 (ADRLISAGTT…FGIVQRLEFY (181 aa)) form a large ATPase domain (RuvB-L) region. Residues isoleucine 23, arginine 24, glycine 65, lysine 68, threonine 69, threonine 70, 131 to 133 (EDY), arginine 174, tyrosine 184, and arginine 221 each bind ATP. Threonine 69 is a Mg(2+) binding site. The segment at 185 to 255 (QVPDLQYIVS…IAAQALDMLN (71 aa)) is small ATPAse domain (RuvB-S). The interval 258 to 336 (AEGFDYMDRK…HFGITPPEMP (79 aa)) is head domain (RuvB-H). Positions 294, 313, and 318 each coordinate DNA.

The protein belongs to the RuvB family. As to quaternary structure, homohexamer. Forms an RuvA(8)-RuvB(12)-Holliday junction (HJ) complex. HJ DNA is sandwiched between 2 RuvA tetramers; dsDNA enters through RuvA and exits via RuvB. An RuvB hexamer assembles on each DNA strand where it exits the tetramer. Each RuvB hexamer is contacted by two RuvA subunits (via domain III) on 2 adjacent RuvB subunits; this complex drives branch migration. In the full resolvosome a probable DNA-RuvA(4)-RuvB(12)-RuvC(2) complex forms which resolves the HJ.

It is found in the cytoplasm. It carries out the reaction ATP + H2O = ADP + phosphate + H(+). Functionally, the RuvA-RuvB-RuvC complex processes Holliday junction (HJ) DNA during genetic recombination and DNA repair, while the RuvA-RuvB complex plays an important role in the rescue of blocked DNA replication forks via replication fork reversal (RFR). RuvA specifically binds to HJ cruciform DNA, conferring on it an open structure. The RuvB hexamer acts as an ATP-dependent pump, pulling dsDNA into and through the RuvAB complex. RuvB forms 2 homohexamers on either side of HJ DNA bound by 1 or 2 RuvA tetramers; 4 subunits per hexamer contact DNA at a time. Coordinated motions by a converter formed by DNA-disengaged RuvB subunits stimulates ATP hydrolysis and nucleotide exchange. Immobilization of the converter enables RuvB to convert the ATP-contained energy into a lever motion, pulling 2 nucleotides of DNA out of the RuvA tetramer per ATP hydrolyzed, thus driving DNA branch migration. The RuvB motors rotate together with the DNA substrate, which together with the progressing nucleotide cycle form the mechanistic basis for DNA recombination by continuous HJ branch migration. Branch migration allows RuvC to scan DNA until it finds its consensus sequence, where it cleaves and resolves cruciform DNA. The protein is Holliday junction branch migration complex subunit RuvB of Shigella flexneri serotype 5b (strain 8401).